Reading from the N-terminus, the 88-residue chain is MAHKKGQGSTQNNRDSAGRRLGVKKFGSEFVRAGNIIVRQRGTKMHPGNNVGMGKDHTLYALIDGVVKFEHKDRNRKKVSVVSQNFGE.

The interval 1–21 (MAHKKGQGSTQNNRDSAGRRL) is disordered.

The protein belongs to the bacterial ribosomal protein bL27 family.

The protein is Large ribosomal subunit protein bL27 of Helicobacter pylori (strain P12).